A 1178-amino-acid polypeptide reads, in one-letter code: Pyruvate carboxylase 1 (1178 aa).

Residues 18-470 (EKNKILVANR…WTTFIDDTPQ (453 aa)) form the Biotin carboxylation domain. Residues K136, E220, and H255 each coordinate ATP. The 198-residue stretch at 140–337 (RNLAAKANVP…IVAAQIQIAA (198 aa)) folds into the ATP-grasp domain. R312 is an active-site residue. The region spanning 557–824 (TLLMDTTWRD…DTGINVEHVR (268 aa)) is the Pyruvate carboxyltransferase domain. Substrate-binding positions include 565 to 569 (RDAHQ) and R638. D566 contributes to the a divalent metal cation binding site. Residues K734, H764, and H766 each coordinate a divalent metal cation. The residue at position 734 (K734) is an N6-carboxylysine. T898 is a binding site for substrate. A Biotinyl-binding domain is found at 1094–1169 (KADMHDPLHI…DSSDLLVLLE (76 aa)). K1135 carries the N6-biotinyllysine modification.

In terms of assembly, homotetramer. Requires biotin as cofactor. The cofactor is Zn(2+).

Its subcellular location is the cytoplasm. It catalyses the reaction hydrogencarbonate + pyruvate + ATP = oxaloacetate + ADP + phosphate + H(+). It functions in the pathway carbohydrate biosynthesis; gluconeogenesis. Its function is as follows. Pyruvate carboxylase catalyzes a 2-step reaction, involving the ATP-dependent carboxylation of the covalently attached biotin in the first step and the transfer of the carboxyl group to pyruvate in the second. This chain is Pyruvate carboxylase 1 (PYC1), found in Saccharomyces cerevisiae (strain ATCC 204508 / S288c) (Baker's yeast).